We begin with the raw amino-acid sequence, 360 residues long: 3-dehydroquinate synthase (360 aa).

NAD(+) is bound by residues 71–76 (DGEQYK), 105–109 (GVVGD), 129–130 (TT), lysine 142, lysine 151, and 169–172 (TLNT). 3 residues coordinate Zn(2+): glutamate 184, histidine 248, and histidine 265.

It belongs to the sugar phosphate cyclases superfamily. Dehydroquinate synthase family. It depends on Co(2+) as a cofactor. Requires Zn(2+) as cofactor. The cofactor is NAD(+).

It localises to the cytoplasm. It catalyses the reaction 7-phospho-2-dehydro-3-deoxy-D-arabino-heptonate = 3-dehydroquinate + phosphate. Its pathway is metabolic intermediate biosynthesis; chorismate biosynthesis; chorismate from D-erythrose 4-phosphate and phosphoenolpyruvate: step 2/7. Catalyzes the conversion of 3-deoxy-D-arabino-heptulosonate 7-phosphate (DAHP) to dehydroquinate (DHQ). The polypeptide is 3-dehydroquinate synthase (Coxiella burnetii (strain CbuG_Q212) (Coxiella burnetii (strain Q212))).